Reading from the N-terminus, the 307-residue chain is Membrane protein insertase YidC 2 (307 aa).

The N-terminal stretch at 1–23 (MKLTLNRILFSGLALSILLTLTG) is a signal peptide. The N-palmitoyl cysteine moiety is linked to residue Cys-24. A lipid anchor (S-diacylglycerol cysteine) is attached at Cys-24. 5 helical membrane passes run 58-78 (LGYGLAIIIVTIIVRTLILPL), 135-155 (LGGIGCLPLLIQMPFFSAMYF), 179-199 (VLTAIIAALYFFQSWLSMMAV), 209-225 (TMMYTMPIMMIFMSFSL), and 231-251 (LYWLVGGFFSIIQQLITTYLL). The interval 263 to 307 (YAKNPPKAYQSTSSRKDVTPSQNMEQANLPKKIKSNRNAGKQRKR) is disordered. Residues 271 to 288 (YQSTSSRKDVTPSQNMEQ) show a composition bias toward polar residues. The span at 293-307 (KKIKSNRNAGKQRKR) shows a compositional bias: basic residues.

This sequence belongs to the OXA1/ALB3/YidC family. Type 2 subfamily.

It localises to the cell membrane. Its function is as follows. Required for the insertion and/or proper folding and/or complex formation of integral membrane proteins into the membrane. Involved in integration of membrane proteins that insert both dependently and independently of the Sec translocase complex, as well as at least some lipoproteins. This chain is Membrane protein insertase YidC 2, found in Streptococcus pyogenes serotype M1.